The chain runs to 144 residues: Androgenic gland hormone (144 aa).

The first 21 residues, 1 to 21 (MKGLVILVSLMCLALYNRICA), serve as a signal peptide directing secretion. 4 disulfides stabilise this stretch: cysteine 33-cysteine 123, cysteine 42-cysteine 59, cysteine 44-cysteine 141, and cysteine 124-cysteine 132. Positions 68 to 113 (SAPEDELAFEDYEDQDYFHPRALSIPSEIEHDNEKESDAFSILSRG) are cleaved as a propeptide — c peptide. Asparagine 133 is a glycosylation site (N-linked (GlcNAc...) (complex) asparagine).

As to expression, androgenic gland.

It is found in the secreted. Functionally, controls sex differentiation and the formation of male appendages, spermatogenesis, pigmentation, and male specific behavior. The chain is Androgenic gland hormone from Armadillidium vulgare (Pillbug).